A 115-amino-acid polypeptide reads, in one-letter code: Large ribosomal subunit protein bL19 (115 aa).

It belongs to the bacterial ribosomal protein bL19 family.

Its function is as follows. This protein is located at the 30S-50S ribosomal subunit interface and may play a role in the structure and function of the aminoacyl-tRNA binding site. This is Large ribosomal subunit protein bL19 from Citrobacter koseri (strain ATCC BAA-895 / CDC 4225-83 / SGSC4696).